Reading from the N-terminus, the 285-residue chain is tRNA uridine(34) hydroxylase (285 aa).

Residues 130-225 (RGDDVVFFDG…YGEAFGDTGL (96 aa)) enclose the Rhodanese domain. Cysteine 185 functions as the Cysteine persulfide intermediate in the catalytic mechanism.

It belongs to the TrhO family.

The catalysed reaction is uridine(34) in tRNA + AH2 + O2 = 5-hydroxyuridine(34) in tRNA + A + H2O. In terms of biological role, catalyzes oxygen-dependent 5-hydroxyuridine (ho5U) modification at position 34 in tRNAs. This chain is tRNA uridine(34) hydroxylase, found in Rhodococcus opacus (strain B4).